The following is a 192-amino-acid chain: Neurogenic differentiation factor 1 (192 aa).

The bHLH domain maps to 19–71 (VRRVKANGRERARMHGLNNALDMLREYIPITTQHQKLSKIETLRLARNYIDAL). A disordered region spans residues 116–192 (PSQFDIFSDP…SHQNTFNYSP (77 aa)). The span at 139–163 (SSFSSSSPSSSCSPPQYYYSPTQPS) shows a compositional bias: low complexity.

In terms of tissue distribution, expressed in neuroblasts of the AB lineage. More specifically in precursors of the embryonic ventral cord motor neurons. Expressed to a lesser degree in the EMS lineage which generates mostly endoderm and mesoderm tissues.

It is found in the nucleus. Its function is as follows. Acts as a transcriptional regulator whose activity is required for several aspects of motor neuron fate specification, including cell division patterns, proper spatiotemporal expression of fate-specific markers, and normal axonal morphology and pathfinding. Involved in regulating glial specification. The polypeptide is Neurogenic differentiation factor 1 (cnd-1) (Caenorhabditis elegans).